Reading from the N-terminus, the 688-residue chain is Glycine--tRNA ligase beta subunit (688 aa).

This sequence belongs to the class-II aminoacyl-tRNA synthetase family. As to quaternary structure, tetramer of two alpha and two beta subunits.

It localises to the cytoplasm. It catalyses the reaction tRNA(Gly) + glycine + ATP = glycyl-tRNA(Gly) + AMP + diphosphate. This is Glycine--tRNA ligase beta subunit from Aliivibrio salmonicida (strain LFI1238) (Vibrio salmonicida (strain LFI1238)).